A 206-amino-acid polypeptide reads, in one-letter code: MVVQDKWKRKATLAYKKKHDIHDAPVKPRKKNLGNNEWRFKNAGEYFDEDNNEEEYPSLESLKTVGNGDTIQDEEEDFEYSKLQARPLTGLGISNQKPKSKVRTIQREEVADMLESVEHEKSIQEFRKRYNVQKPKVNISHAEAEEDIDSFLESMDQSAPPSITEDKGENYISSNHSSMHISRNDSRNYMSEKPNKDQSWLDELLR.

The segment at 128–206 is disordered; the sequence is KRYNVQKPKV…DQSWLDELLR (79 aa). Over residues 171 to 181 the composition is skewed to polar residues; the sequence is YISSNHSSMHI.

Its subcellular location is the cytoplasm. The protein localises to the nucleus. This is an uncharacterized protein from Schizosaccharomyces pombe (strain 972 / ATCC 24843) (Fission yeast).